We begin with the raw amino-acid sequence, 616 residues long: Glutamine--fructose-6-phosphate aminotransferase [isomerizing] (616 aa).

Catalysis depends on C2, which acts as the Nucleophile; for GATase activity. The Glutamine amidotransferase type-2 domain occupies 2–221; the sequence is CGIVGYVGTD…QDQIVTITPE (220 aa). 2 SIS domains span residues 288-428 and 461-606; these read LGDE…VRGT and LAHW…VDQP. The For Fru-6P isomerization activity role is filled by K611.

Homodimer.

It is found in the cytoplasm. It catalyses the reaction D-fructose 6-phosphate + L-glutamine = D-glucosamine 6-phosphate + L-glutamate. Its function is as follows. Catalyzes the first step in hexosamine metabolism, converting fructose-6P into glucosamine-6P using glutamine as a nitrogen source. This Leifsonia xyli subsp. xyli (strain CTCB07) protein is Glutamine--fructose-6-phosphate aminotransferase [isomerizing].